The following is a 229-amino-acid chain: Orotidine 5'-phosphate decarboxylase (229 aa).

Substrate is bound by residues Asp10, Lys32, 59–68 (DLKFHDIPNT), Thr119, Arg180, Gln189, Gly209, and Arg210. Lys61 (proton donor) is an active-site residue.

This sequence belongs to the OMP decarboxylase family. Type 1 subfamily. Homodimer.

The enzyme catalyses orotidine 5'-phosphate + H(+) = UMP + CO2. Its pathway is pyrimidine metabolism; UMP biosynthesis via de novo pathway; UMP from orotate: step 2/2. Functionally, catalyzes the decarboxylation of orotidine 5'-monophosphate (OMP) to uridine 5'-monophosphate (UMP). This Legionella pneumophila (strain Lens) protein is Orotidine 5'-phosphate decarboxylase.